Here is a 46-residue protein sequence, read N- to C-terminus: VNSNYTGGEPKRSRTAYTRQQVLELEKEFLFNRYLTRRRRIQHTLT.

Positions 1–46 (VNSNYTGGEPKRSRTAYTRQQVLELEKEFLFNRYLTRRRRIQHTLT) form a DNA-binding region, homeobox.

Belongs to the Antp homeobox family. Deformed subfamily. Forms a DNA-binding heterodimer with transcription factor PBX1.

The protein resides in the nucleus. In terms of biological role, sequence-specific transcription factor which is part of a developmental regulatory system that provides cells with specific positional identities on the anterior-posterior axis. The polypeptide is Homeobox protein Hox-D4 (HOXD4) (Ovis aries (Sheep)).